The chain runs to 2550 residues: Highly reducing polyketide synthase otaA (2550 aa).

The Ketosynthase family 3 (KS3) domain maps to 9-431 (SEPLAIIGLA…GTNAHAVVED (423 aa)). Residues C182, H317, and H355 each act as for beta-ketoacyl synthase activity in the active site. The tract at residues 572–894 (FVFTGQGANW…KRYETNGSTI (323 aa)) is malonyl-CoA:ACP transacylase (MAT) domain. An N-terminal hotdog fold region spans residues 959–1094 (HELLGVPVED…GSVRAETGPP (136 aa)). Residues 959–1252 (HELLGVPVED…DLVQLPANND (294 aa)) are dehydratase (DH) domain. The 295-residue stretch at 959–1253 (HELLGVPVED…LVQLPANNDD (295 aa)) folds into the PKS/mFAS DH domain. The tract at residues 1107 to 1253 (AEPVDIAQMY…LVQLPANNDD (147 aa)) is C-terminal hotdog fold. I1420 and E1442 together coordinate S-adenosyl-L-methionine. Residues 1433-1612 (HAQTGIKILE…GLRPRLIIND (180 aa)) are methyltransferase (CMeT) domain. Residues 1859 to 1919 (PDEVKIRIHA…DQVMALRTGP (61 aa)) form an enoyl reductase (ER) (ER) domain region. A ketoreductase (KR) domain region spans residues 2166-2345 (ASYLLIGGFG…PATSVSLGSV (180 aa)). The Carrier domain occupies 2454 to 2531 (AAVEVVTRAI…QLAQQAADAS (78 aa)). S2491 bears the O-(pantetheine 4'-phosphoryl)serine mark.

Requires pantetheine 4'-phosphate as cofactor.

It catalyses the reaction 4 malonyl-CoA + acetyl-CoA + 5 NADPH + 9 H(+) = 7-methylmellein + 3 CO2 + 5 NADP(+) + 5 CoA + 4 H2O. The protein operates within mycotoxin biosynthesis. Functionally, highly reducing polyketide synthase; part of the gene cluster that mediates the biosynthesis of ochratoxin A (OTA), a mycotoxin composed of a chlorinated type I polyketide dihydroisocoumarin moiety linked to L-phenylalanine, and demonstrated to have nephrotoxic, immunotoxic, genotoxic, neurotoxic, and teratogenic properties. OtaA catalyzes the condensation of one acetate and 4 malonate units to form the isocoumarin group. The pathway begins with the highly reducing polyketide synthase otaA that catalyzes the formation of the isocoumarin group during the initial stages of biosynthesis, starting from one acetate and 4 malonate units, to originate the characteristic pentaketide skeleton 7-methylmellein (7-MM) of the OTA molecule. The newly identified cyclase otaY might be involved in the polyketide cyclization reaction during the initial steps of the OTA biosynthesis. 7-MM is then oxidized into 7-carboxymellein (also called ochratoxin beta) by the cytochrome P450 monooxygenase otaC. The NRPS encoded by the otaB gene is involved in the linking of phenylalanine to the dihydroisocoumarin ring. The reaction catalyzed by NRPS results in the production of ochratoxin B (OTB), which is the non-chlorinated analog of OTA and which subsequently serves as the substrate of the halogenase otaD for chlorination activity to form the final molecular structure of OTA, containing a chlorine atom in the C-5 position of the molecule. The chain is Highly reducing polyketide synthase otaA from Aspergillus niger (strain ATCC MYA-4892 / CBS 513.88 / FGSC A1513).